The following is a 607-amino-acid chain: UvrABC system protein C (607 aa).

Residues 12–91 (DSPGVYLYKD…IKRYRPRYNI (80 aa)) enclose the GIY-YIG domain. Positions 200–235 (ENLIKKLKKEMAIASDNLEFERAAKLRDQILALEKI) constitute a UVR domain.

Belongs to the UvrC family. In terms of assembly, interacts with UvrB in an incision complex.

It localises to the cytoplasm. Functionally, the UvrABC repair system catalyzes the recognition and processing of DNA lesions. UvrC both incises the 5' and 3' sides of the lesion. The N-terminal half is responsible for the 3' incision and the C-terminal half is responsible for the 5' incision. This is UvrABC system protein C from Carboxydothermus hydrogenoformans (strain ATCC BAA-161 / DSM 6008 / Z-2901).